Reading from the N-terminus, the 336-residue chain is N-acetyl-gamma-glutamyl-phosphate reductase (336 aa).

C144 is a catalytic residue.

The protein belongs to the NAGSA dehydrogenase family. Type 1 subfamily.

It is found in the cytoplasm. It catalyses the reaction N-acetyl-L-glutamate 5-semialdehyde + phosphate + NADP(+) = N-acetyl-L-glutamyl 5-phosphate + NADPH + H(+). It functions in the pathway amino-acid biosynthesis; L-arginine biosynthesis; N(2)-acetyl-L-ornithine from L-glutamate: step 3/4. In terms of biological role, catalyzes the NADPH-dependent reduction of N-acetyl-5-glutamyl phosphate to yield N-acetyl-L-glutamate 5-semialdehyde. The polypeptide is N-acetyl-gamma-glutamyl-phosphate reductase (Methanosarcina acetivorans (strain ATCC 35395 / DSM 2834 / JCM 12185 / C2A)).